A 198-amino-acid chain; its full sequence is Large ribosomal subunit protein bL25 (198 aa).

This sequence belongs to the bacterial ribosomal protein bL25 family. CTC subfamily. In terms of assembly, part of the 50S ribosomal subunit; part of the 5S rRNA/L5/L18/L25 subcomplex. Contacts the 5S rRNA. Binds to the 5S rRNA independently of L5 and L18.

Its function is as follows. This is one of the proteins that binds to the 5S RNA in the ribosome where it forms part of the central protuberance. This chain is Large ribosomal subunit protein bL25, found in Bordetella avium (strain 197N).